Reading from the N-terminus, the 79-residue chain is UPF0291 protein lp_2062 (79 aa).

The protein belongs to the UPF0291 family.

It is found in the cytoplasm. The chain is UPF0291 protein lp_2062 from Lactiplantibacillus plantarum (strain ATCC BAA-793 / NCIMB 8826 / WCFS1) (Lactobacillus plantarum).